The sequence spans 442 residues: Protein translocase subunit SecF (442 aa).

Residues 1–39 (MASKAKTGRDDEATSAVELTEATESAVARTDGDSTTDTA) form a disordered region. Helical transmembrane passes span 67–87 (WFGVSGAIVAVAIASIVFRGF), 187–207 (ITKKAVIALVVFLVLVALYIT), 218–238 (AITAMLFDLTVTAGVYSLVGF), 243–263 (ATVIGLLTILGFSLYDTVIVF), 301–321 (LIGVLPVLALMLVAVWLLGVG), and 331–351 (LIGIIIGTYSSIFFATPLLVT). The interval 366–442 (VLKRRNSGSP…PTGKRNAGRR (77 aa)) is disordered. A compositionally biased stretch (low complexity) spans 402-432 (QASSQSAPRAAQGSSKPAPGARPVRPVGTRR). Basic residues predominate over residues 433–442 (PTGKRNAGRR).

This sequence belongs to the SecD/SecF family. SecF subfamily. In terms of assembly, forms a complex with SecD. Part of the essential Sec protein translocation apparatus which comprises SecA, SecYEG and auxiliary proteins SecDF. Other proteins may also be involved.

The protein resides in the cell membrane. Functionally, part of the Sec protein translocase complex. Interacts with the SecYEG preprotein conducting channel. SecDF uses the proton motive force (PMF) to complete protein translocation after the ATP-dependent function of SecA. The polypeptide is Protein translocase subunit SecF (Mycobacterium tuberculosis (strain CDC 1551 / Oshkosh)).